Consider the following 1404-residue polypeptide: DNA-directed RNA polymerase subunit beta' (1404 aa).

Residues Cys70, Cys72, Cys85, and Cys88 each coordinate Zn(2+). Residues Asp460, Asp462, and Asp464 each contribute to the Mg(2+) site. Residues Cys814, Cys888, Cys895, and Cys898 each coordinate Zn(2+).

The protein belongs to the RNA polymerase beta' chain family. In terms of assembly, the RNAP catalytic core consists of 2 alpha, 1 beta, 1 beta' and 1 omega subunit. When a sigma factor is associated with the core the holoenzyme is formed, which can initiate transcription. Requires Mg(2+) as cofactor. Zn(2+) is required as a cofactor.

It catalyses the reaction RNA(n) + a ribonucleoside 5'-triphosphate = RNA(n+1) + diphosphate. DNA-dependent RNA polymerase catalyzes the transcription of DNA into RNA using the four ribonucleoside triphosphates as substrates. The chain is DNA-directed RNA polymerase subunit beta' from Shewanella amazonensis (strain ATCC BAA-1098 / SB2B).